The following is a 275-amino-acid chain: Bis(5'-nucleosyl)-tetraphosphatase, symmetrical (275 aa).

This sequence belongs to the Ap4A hydrolase family.

The catalysed reaction is P(1),P(4)-bis(5'-adenosyl) tetraphosphate + H2O = 2 ADP + 2 H(+). Its function is as follows. Hydrolyzes diadenosine 5',5'''-P1,P4-tetraphosphate to yield ADP. The chain is Bis(5'-nucleosyl)-tetraphosphatase, symmetrical from Haemophilus influenzae (strain PittGG).